Consider the following 265-residue polypeptide: Cytochrome c oxidase subunit 3 (265 aa).

6 consecutive transmembrane segments (helical) span residues proline 16–leucine 36, proline 40–tryptophan 60, cysteine 83–phenylalanine 103, valine 159–glutamine 179, valine 198–methionine 218, and isoleucine 241–tryptophan 261.

It belongs to the cytochrome c oxidase subunit 3 family. As to quaternary structure, component of the cytochrome c oxidase (complex IV, CIV), a multisubunit enzyme composed of a catalytic core of 3 subunits and several supernumerary subunits. The complex exists as a monomer or a dimer and forms supercomplexes (SCs) in the inner mitochondrial membrane with ubiquinol-cytochrome c oxidoreductase (cytochrome b-c1 complex, complex III, CIII).

It localises to the mitochondrion inner membrane. The enzyme catalyses 4 Fe(II)-[cytochrome c] + O2 + 8 H(+)(in) = 4 Fe(III)-[cytochrome c] + 2 H2O + 4 H(+)(out). Functionally, component of the cytochrome c oxidase, the last enzyme in the mitochondrial electron transport chain which drives oxidative phosphorylation. The respiratory chain contains 3 multisubunit complexes succinate dehydrogenase (complex II, CII), ubiquinol-cytochrome c oxidoreductase (cytochrome b-c1 complex, complex III, CIII) and cytochrome c oxidase (complex IV, CIV), that cooperate to transfer electrons derived from NADH and succinate to molecular oxygen, creating an electrochemical gradient over the inner membrane that drives transmembrane transport and the ATP synthase. Cytochrome c oxidase is the component of the respiratory chain that catalyzes the reduction of oxygen to water. Electrons originating from reduced cytochrome c in the intermembrane space (IMS) are transferred via the dinuclear copper A center (CU(A)) of subunit 2 and heme A of subunit 1 to the active site in subunit 1, a binuclear center (BNC) formed by heme A3 and copper B (CU(B)). The BNC reduces molecular oxygen to 2 water molecules using 4 electrons from cytochrome c in the IMS and 4 protons from the mitochondrial matrix. The protein is Cytochrome c oxidase subunit 3 (COIII) of Mytilus edulis (Blue mussel).